We begin with the raw amino-acid sequence, 192 residues long: Signal peptidase complex catalytic subunit SEC11C (192 aa).

At M1–R28 the chain is on the cytoplasmic side. Residues Q29–W48 form a helical; Signal-anchor for type II membrane protein membrane-spanning segment. Residues K49–S192 are Lumenal-facing. Active-site charge relay system residues include S68, H108, and D134. A C-terminal short (CTS) helix region spans residues A177–L188.

This sequence belongs to the peptidase S26B family. In terms of assembly, component of the signal peptidase complex paralog C (SPC-C) composed of a catalytic subunit SEC11C and three accessory subunits SPCS1, SPCS2 and SPCS3. Within the complex, interacts with SPCS2 and SPCS3. The complex induces a local thinning of the ER membrane which is used to measure the length of the signal peptide (SP) h-region of protein substrates. This ensures the selectivity of the complex towards h-regions shorter than 18-20 amino acids. May undergo processing at the N-terminus.

Its subcellular location is the endoplasmic reticulum membrane. The catalysed reaction is Cleavage of hydrophobic, N-terminal signal or leader sequences from secreted and periplasmic proteins.. Functionally, catalytic component of the signal peptidase complex (SPC) which catalyzes the cleavage of N-terminal signal sequences from nascent proteins as they are translocated into the lumen of the endoplasmic reticulum. Specifically cleaves N-terminal signal peptides that contain a hydrophobic alpha-helix (h-region) shorter than 18-20 amino acids. The chain is Signal peptidase complex catalytic subunit SEC11C (SEC11C) from Homo sapiens (Human).